An 89-amino-acid chain; its full sequence is Large ribosomal subunit protein bL31B (89 aa).

The segment at 70–89 (RVQRFESRRRRRQQQSGEQG) is disordered.

Belongs to the bacterial ribosomal protein bL31 family. Type B subfamily. As to quaternary structure, part of the 50S ribosomal subunit.

The protein is Large ribosomal subunit protein bL31B of Rubrobacter xylanophilus (strain DSM 9941 / JCM 11954 / NBRC 16129 / PRD-1).